The chain runs to 484 residues: Adenylosuccinate lyase (484 aa).

Residue Ala-2 is modified to N-acetylalanine. Substrate contacts are provided by residues 20–21, 85–87, and 111–112; these read RY, RHD, and TS. Position 147 is an N6-acetyllysine (Lys-147). The active-site Proton donor/acceptor is the His-159. Gln-241 contributes to the substrate binding site. Ser-289 (proton donor/acceptor) is an active-site residue. Position 295 is an N6-acetyllysine (Lys-295). Substrate-binding residues include Arg-303, Arg-329, Ser-334, and Arg-338. A Glycyl lysine isopeptide (Lys-Gly) (interchain with G-Cter in SUMO1) cross-link involves residue Lys-415.

This sequence belongs to the lyase 1 family. Adenylosuccinate lyase subfamily. As to quaternary structure, homotetramer. Residues from neighboring subunits contribute catalytic and substrate-binding residues to each active site.

It carries out the reaction N(6)-(1,2-dicarboxyethyl)-AMP = fumarate + AMP. The enzyme catalyses (2S)-2-[5-amino-1-(5-phospho-beta-D-ribosyl)imidazole-4-carboxamido]succinate = 5-amino-1-(5-phospho-beta-D-ribosyl)imidazole-4-carboxamide + fumarate. The protein operates within purine metabolism; AMP biosynthesis via de novo pathway; AMP from IMP: step 2/2. It participates in purine metabolism; IMP biosynthesis via de novo pathway; 5-amino-1-(5-phospho-D-ribosyl)imidazole-4-carboxamide from 5-amino-1-(5-phospho-D-ribosyl)imidazole-4-carboxylate: step 2/2. In terms of biological role, catalyzes two non-sequential steps in de novo AMP synthesis: converts (S)-2-(5-amino-1-(5-phospho-D-ribosyl)imidazole-4-carboxamido)succinate (SAICAR) to fumarate plus 5-amino-1-(5-phospho-D-ribosyl)imidazole-4-carboxamide, and thereby also contributes to de novo IMP synthesis, and converts succinyladenosine monophosphate (SAMP) to AMP and fumarate. This Macaca fascicularis (Crab-eating macaque) protein is Adenylosuccinate lyase (ADSL).